The chain runs to 195 residues: Molybdenum cofactor guanylyltransferase (195 aa).

GTP-binding positions include L10–G12, K23, N51, D69, and D99. D99 serves as a coordination point for Mg(2+).

It belongs to the MobA family. As to quaternary structure, monomer. Mg(2+) serves as cofactor.

It is found in the cytoplasm. The catalysed reaction is Mo-molybdopterin + GTP + H(+) = Mo-molybdopterin guanine dinucleotide + diphosphate. Functionally, transfers a GMP moiety from GTP to Mo-molybdopterin (Mo-MPT) cofactor (Moco or molybdenum cofactor) to form Mo-molybdopterin guanine dinucleotide (Mo-MGD) cofactor. In Yersinia pseudotuberculosis serotype O:1b (strain IP 31758), this protein is Molybdenum cofactor guanylyltransferase.